A 354-amino-acid chain; its full sequence is Tribbles homolog 3 (354 aa).

The segment at 1-127 is interaction with DDIT3/CHOP; it reads MRATPLAASA…QHVARPTEVL (127 aa). Residues 36–61 form a disordered region; the sequence is RDEPEPGPLPSLLPPSPPPASDLSPA. Pro residues predominate over residues 41–55; that stretch reads PGPLPSLLPPSPPPA. The 248-residue stretch at 68-315 folds into the Protein kinase domain; it reads LGPYILLERE…ALGILLHPWL (248 aa). The segment covering 320 to 333 has biased composition (basic and acidic residues); sequence GRVSPPQSDRREMD. Residues 320–354 are disordered; the sequence is GRVSPPQSDRREMDQVVPDGPQLEEAEEGEVGLYG. A compositionally biased stretch (acidic residues) spans 341-354; it reads QLEEAEEGEVGLYG.

Belongs to the protein kinase superfamily. CAMK Ser/Thr protein kinase family. Tribbles subfamily. Interacts with AKT1, AKT2, MAP2K1 and MAP2K7. Interacts with ATF4. Interacts with DDIT3/CHOP and inhibits its interaction with EP300/P300. Interacts with APOBEC3C. Interacts (via N-terminus) with APOBEC3A. Interacts with RELA. As to expression, highly expressed in liver. Not detected in heart, brain, spleen, lung, skeletal muscle, kidney or testis.

It localises to the nucleus. Inactive protein kinase which acts as a regulator of the integrated stress response (ISR), a process for adaptation to various stress. Inhibits the transcriptional activity of DDIT3/CHOP and is involved in DDIT3/CHOP-dependent cell death during ER stress. May play a role in programmed neuronal cell death but does not appear to affect non-neuronal cells. Acts as a negative feedback regulator of the ATF4-dependent transcription during the ISR: while TRIB3 expression is promoted by ATF4, TRIB3 protein interacts with ATF4 and inhibits ATF4 transcription activity. Disrupts insulin signaling by binding directly to Akt kinases and blocking their activation. May bind directly to and mask the 'Thr-308' phosphorylation site in AKT1. Interacts with the NF-kappa-B transactivator p65 RELA and inhibits its phosphorylation and thus its transcriptional activation activity. Interacts with MAPK kinases and regulates activation of MAP kinases. Can inhibit APOBEC3A editing of nuclear DNA. In Mus musculus (Mouse), this protein is Tribbles homolog 3 (Trib3).